The sequence spans 310 residues: tRNA uridine(34) hydroxylase (310 aa).

The 99-residue stretch at 134 to 232 (DDPDTLLIDT…YFEEVSQTES (99 aa)) folds into the Rhodanese domain. The Cysteine persulfide intermediate role is filled by C192.

Belongs to the TrhO family.

The enzyme catalyses uridine(34) in tRNA + AH2 + O2 = 5-hydroxyuridine(34) in tRNA + A + H2O. In terms of biological role, catalyzes oxygen-dependent 5-hydroxyuridine (ho5U) modification at position 34 in tRNAs. The protein is tRNA uridine(34) hydroxylase of Prochlorococcus marinus (strain MIT 9313).